The sequence spans 425 residues: Adenylosuccinate synthetase (425 aa).

GTP is bound by residues 12-18 and 40-42; these read GDEGKGK and GHT. Residue Asp13 is the Proton acceptor of the active site. Residues Asp13 and Gly40 each coordinate Mg(2+). IMP is bound by residues 13 to 16, 38 to 41, Thr130, Arg144, Gln225, Thr240, and Arg304; these read DEGK and NAGH. The Proton donor role is filled by His41. 300–306 is a substrate binding site; sequence ATTGRPR. GTP-binding positions include Arg306, 332-334, and 414-416; these read KLD and SVG.

The protein belongs to the adenylosuccinate synthetase family. Homodimer. Mg(2+) serves as cofactor.

The protein resides in the cytoplasm. It carries out the reaction IMP + L-aspartate + GTP = N(6)-(1,2-dicarboxyethyl)-AMP + GDP + phosphate + 2 H(+). The protein operates within purine metabolism; AMP biosynthesis via de novo pathway; AMP from IMP: step 1/2. Its function is as follows. Plays an important role in the de novo pathway of purine nucleotide biosynthesis. Catalyzes the first committed step in the biosynthesis of AMP from IMP. This chain is Adenylosuccinate synthetase, found in Desulfovibrio desulfuricans (strain ATCC 27774 / DSM 6949 / MB).